Here is a 289-residue protein sequence, read N- to C-terminus: MLSSPVASTPFSVADILRLECQQKDSKTLSQWELHRNPVKPRYLRMNQESGWFESSDRAQAVPFRCTWETVLEMGSNPVGEPQTPPGTISRLGARNPMTDRGVGNLSGDMRRGGPVSTRTRPQRKSRVLFSQAQVLALERRFKQQRYLTAPEREHLASALQLTSTQVKIWFQNRRYKSKSQRQDQTLELAGHPLAPRRVAVPVLVLDGKPCLDPDVAAFLGPYKATSPYSCFGGYAGTPYDASYASRCTSASAGPGPLTPLASSGFSPGGQSAAPQGHLPATPQGVTAW.

Disordered stretches follow at residues G75 to K125 and T259 to W289. The segment at residues Q123–R182 is a DNA-binding region (homeobox). A compositionally biased stretch (polar residues) spans L261–A274.

Belongs to the NK-2 homeobox family. As to expression, not detected in any neonate or adult tissues.

The protein localises to the nucleus. Its function is as follows. Acts as a transcriptional activator. In conjunction with NKX2-5, may play a role in both pharyngeal and cardiac embryonic development. The protein is Homeobox protein Nkx-2.6 (Nkx2-6) of Mus musculus (Mouse).